Consider the following 124-residue polypeptide: Small ribosomal subunit protein uS12 (124 aa).

The disordered stretch occupies residues 1–29 (MATINQLVRKGRKRRVAKSNVPALEASPQ). A 3-methylthioaspartic acid modification is found at Asp89. A disordered region spans residues 101 to 124 (AADTAGVDKRRQGRSKYGAKRPKS). Basic residues predominate over residues 111 to 124 (RQGRSKYGAKRPKS).

The protein belongs to the universal ribosomal protein uS12 family. In terms of assembly, part of the 30S ribosomal subunit. Contacts proteins S8 and S17. May interact with IF1 in the 30S initiation complex.

In terms of biological role, with S4 and S5 plays an important role in translational accuracy. Functionally, interacts with and stabilizes bases of the 16S rRNA that are involved in tRNA selection in the A site and with the mRNA backbone. Located at the interface of the 30S and 50S subunits, it traverses the body of the 30S subunit contacting proteins on the other side and probably holding the rRNA structure together. The combined cluster of proteins S8, S12 and S17 appears to hold together the shoulder and platform of the 30S subunit. The sequence is that of Small ribosomal subunit protein uS12 from Alkalilimnicola ehrlichii (strain ATCC BAA-1101 / DSM 17681 / MLHE-1).